The chain runs to 298 residues: tRNA dimethylallyltransferase (298 aa).

12-19 (GPTASGKT) is an ATP binding site. 14 to 19 (TASGKT) is a substrate binding site. An interaction with substrate tRNA region spans residues 37–40 (DSRQ).

This sequence belongs to the IPP transferase family. As to quaternary structure, monomer. The cofactor is Mg(2+).

It catalyses the reaction adenosine(37) in tRNA + dimethylallyl diphosphate = N(6)-dimethylallyladenosine(37) in tRNA + diphosphate. Functionally, catalyzes the transfer of a dimethylallyl group onto the adenine at position 37 in tRNAs that read codons beginning with uridine, leading to the formation of N6-(dimethylallyl)adenosine (i(6)A). This chain is tRNA dimethylallyltransferase, found in Synechococcus sp. (strain CC9902).